The primary structure comprises 271 residues: Formamidopyrimidine-DNA glycosylase (271 aa).

Pro-2 serves as the catalytic Schiff-base intermediate with DNA. The active-site Proton donor is the Glu-3. Catalysis depends on Lys-58, which acts as the Proton donor; for beta-elimination activity. His-92, Arg-111, and Lys-152 together coordinate DNA. The FPG-type zinc finger occupies 237-271 (YVYGKVQKPCKICNNIITLIRQNGRSTYFCNACQN). Arg-261 acts as the Proton donor; for delta-elimination activity in catalysis.

The protein belongs to the FPG family. As to quaternary structure, monomer. It depends on Zn(2+) as a cofactor.

It catalyses the reaction Hydrolysis of DNA containing ring-opened 7-methylguanine residues, releasing 2,6-diamino-4-hydroxy-5-(N-methyl)formamidopyrimidine.. The catalysed reaction is 2'-deoxyribonucleotide-(2'-deoxyribose 5'-phosphate)-2'-deoxyribonucleotide-DNA = a 3'-end 2'-deoxyribonucleotide-(2,3-dehydro-2,3-deoxyribose 5'-phosphate)-DNA + a 5'-end 5'-phospho-2'-deoxyribonucleoside-DNA + H(+). In terms of biological role, involved in base excision repair of DNA damaged by oxidation or by mutagenic agents. Acts as a DNA glycosylase that recognizes and removes damaged bases. Has a preference for oxidized purines, such as 7,8-dihydro-8-oxoguanine (8-oxoG). Has AP (apurinic/apyrimidinic) lyase activity and introduces nicks in the DNA strand. Cleaves the DNA backbone by beta-delta elimination to generate a single-strand break at the site of the removed base with both 3'- and 5'-phosphates. The polypeptide is Formamidopyrimidine-DNA glycosylase (Wolbachia sp. subsp. Drosophila simulans (strain wRi)).